The sequence spans 464 residues: Argininosuccinate lyase (464 aa).

It belongs to the lyase 1 family. Argininosuccinate lyase subfamily.

The protein localises to the cytoplasm. The enzyme catalyses 2-(N(omega)-L-arginino)succinate = fumarate + L-arginine. The protein operates within amino-acid biosynthesis; L-arginine biosynthesis; L-arginine from L-ornithine and carbamoyl phosphate: step 3/3. This Pseudomonas putida (strain W619) protein is Argininosuccinate lyase.